A 418-amino-acid polypeptide reads, in one-letter code: MPIKLLMPALSPTMTEGNLARWLKKEGDKINPGEVIAEIETDKATMEVEAVDEGTLAKIIIPQGSQNVPVNSLIAVLIEEGEELSGIEEFIAKNNSNSPKKEEISKPAETIAPQNVKEENITTASDQNNIKVFASPLAKRLAKIQNVRIEEIKGSGPHGRIIKQDVLSHKGGSKALSNKIVSRNPEEYRLAPNNNIRKIIAKRLLESKQTVPHFYLSIECNVDKLLDIREDINKSFGDDKSAKISVNDFIILAVAKALQEVPNANASWGDDAIRYYNNVDISVAVAIENGLVTPIIRNADQKNIVDLSSEMKGLIKKARENKLTPEEFQGGGFTISNLGMYGIKNFNAIINPPQSCIMGVGSSSKRAIVKNDQISIATIMDVTLSADHRVVDGAVGAEFLAAFKRFIESPALMLLYTR.

The Lipoyl-binding domain maps to 2–78; sequence PIKLLMPALS…PVNSLIAVLI (77 aa). An N6-lipoyllysine modification is found at Lys43. A Peripheral subunit-binding (PSBD) domain is found at 133-170; sequence FASPLAKRLAKIQNVRIEEIKGSGPHGRIIKQDVLSHK. His388 is an active-site residue.

Belongs to the 2-oxoacid dehydrogenase family. As to quaternary structure, forms a 24-polypeptide structural core with octahedral symmetry. (R)-lipoate is required as a cofactor.

It catalyses the reaction N(6)-[(R)-dihydrolipoyl]-L-lysyl-[protein] + acetyl-CoA = N(6)-[(R)-S(8)-acetyldihydrolipoyl]-L-lysyl-[protein] + CoA. The pyruvate dehydrogenase complex catalyzes the overall conversion of pyruvate to acetyl-CoA and CO(2). It contains multiple copies of three enzymatic components: pyruvate dehydrogenase (E1), dihydrolipoamide acetyltransferase (E2) and lipoamide dehydrogenase (E3). This chain is Dihydrolipoyllysine-residue acetyltransferase component of pyruvate dehydrogenase complex (pdhC), found in Rickettsia bellii (strain RML369-C).